A 305-amino-acid polypeptide reads, in one-letter code: Dermonecrotic toxin LrSicTox-alphaIA1ii (305 aa).

A signal peptide spans 1–18 (MLLYVTLILGCWSAFSES). Positions 19 to 26 (AETDVAER) are excised as a propeptide. His-37 is a catalytic residue. The Mg(2+) site is built by Glu-57 and Asp-59. The active-site Nucleophile is the His-73. 2 disulfide bridges follow: Cys-77–Cys-83 and Cys-79–Cys-222. Asp-117 contributes to the Mg(2+) binding site. N-linked (GlcNAc...) asparagine glycosylation is present at Asn-282.

This sequence belongs to the arthropod phospholipase D family. Class II subfamily. Class IIa sub-subfamily. The cofactor is Mg(2+). Expressed by the venom gland.

The protein resides in the secreted. The enzyme catalyses an N-(acyl)-sphingosylphosphocholine = an N-(acyl)-sphingosyl-1,3-cyclic phosphate + choline. The catalysed reaction is an N-(acyl)-sphingosylphosphoethanolamine = an N-(acyl)-sphingosyl-1,3-cyclic phosphate + ethanolamine. It carries out the reaction a 1-acyl-sn-glycero-3-phosphocholine = a 1-acyl-sn-glycero-2,3-cyclic phosphate + choline. It catalyses the reaction a 1-acyl-sn-glycero-3-phosphoethanolamine = a 1-acyl-sn-glycero-2,3-cyclic phosphate + ethanolamine. Inhibited with low affinity by edelfosine. Its function is as follows. Dermonecrotic toxins cleave the phosphodiester linkage between the phosphate and headgroup of certain phospholipids (sphingolipid and lysolipid substrates), forming an alcohol (often choline) and a cyclic phosphate. This toxin acts on sphingomyelin (SM). It also acts on a broad range of lysophospholipids, like lysophosphatidylinositol (LPI), lysophosphatidylglycerol (LPG), lysophosphatidylethanolamine (LPE), lysobisphosphatidic acid (LBPA), lysophosphatidylserine (LPS) and lysophosphatidylcholines (LPC) of varying chain lengths. The substrate preference is LPI &gt; LPG &gt; LPS &gt; LPC &gt;&gt; LPE, LBPA. Furthermore, the enzyme also act on cyclic phosphatidic acid and lyso-platelet activating factor (LPAF, an alkyl-LPC). The enzyme does not act on sphingosylphosphorylcholine (SPC, also known as lyso-sphingomyelin) and PAF. The toxin may also act on ceramide phosphoethanolamine (CPE). It acts by transphosphatidylation, releasing exclusively cyclic phosphate products as second products. It does not exhibit detectable PLA1/2 activity. It induces dose-dependent hemolysis and dermonecrosis. Also induces increased vascular permeability, edema, inflammatory response, and platelet aggregation. The chain is Dermonecrotic toxin LrSicTox-alphaIA1ii from Loxosceles reclusa (Brown recluse spider).